A 364-amino-acid chain; its full sequence is Aminomethyltransferase (364 aa).

It belongs to the GcvT family. As to quaternary structure, the glycine cleavage system is composed of four proteins: P, T, L and H.

It catalyses the reaction N(6)-[(R)-S(8)-aminomethyldihydrolipoyl]-L-lysyl-[protein] + (6S)-5,6,7,8-tetrahydrofolate = N(6)-[(R)-dihydrolipoyl]-L-lysyl-[protein] + (6R)-5,10-methylene-5,6,7,8-tetrahydrofolate + NH4(+). The glycine cleavage system catalyzes the degradation of glycine. This is Aminomethyltransferase from Shewanella halifaxensis (strain HAW-EB4).